Reading from the N-terminus, the 358-residue chain is Adenosine deaminase (358 aa).

Zn(2+) contacts are provided by His-14 and His-16. Residues His-16, Asp-18, and Gly-183 each contribute to the substrate site. Residue His-212 coordinates Zn(2+). Residue Glu-215 is the Proton donor of the active site. Asp-294 contacts Zn(2+). Position 295 (Asp-295) interacts with substrate.

It belongs to the metallo-dependent hydrolases superfamily. Adenosine and AMP deaminases family. Requires Zn(2+) as cofactor.

The protein resides in the cell membrane. Its subcellular location is the cell junction. It localises to the cytoplasmic vesicle lumen. It is found in the cytoplasm. The protein localises to the lysosome. It carries out the reaction adenosine + H2O + H(+) = inosine + NH4(+). It catalyses the reaction 2'-deoxyadenosine + H2O + H(+) = 2'-deoxyinosine + NH4(+). In terms of biological role, catalyzes the hydrolytic deamination of adenosine and 2-deoxyadenosine. Plays an important role in purine metabolism and in adenosine homeostasis. Modulates signaling by extracellular adenosine, and so contributes indirectly to cellular signaling events. May act as a positive regulator of T-cell coactivation. This Xenopus tropicalis (Western clawed frog) protein is Adenosine deaminase (ada).